An 809-amino-acid polypeptide reads, in one-letter code: Quinate/shikimate dehydrogenase (quinone) (809 aa).

Helical transmembrane passes span 14–34 (VWCF…VIGG), 41–61 (GGSW…FFMF), 68–88 (VWLY…DAGF), 90–110 (FWPL…VMLT), and 127–147 (AYVI…GMFI).

The protein belongs to the bacterial PQQ dehydrogenase family. Pyrroloquinoline quinone is required as a cofactor.

The protein localises to the cell membrane. The enzyme catalyses L-quinate + a quinone = 3-dehydroquinate + a quinol. The catalysed reaction is shikimate + a quinone = 3-dehydroshikimate + a quinol. It participates in aromatic compound metabolism; 3,4-dihydroxybenzoate biosynthesis; 3-dehydroquinate from D-quinate (PQQ route): step 1/1. Its function is as follows. Can act either on quinate or on shikimate. This Acinetobacter baylyi (strain ATCC 33305 / BD413 / ADP1) protein is Quinate/shikimate dehydrogenase (quinone) (quiA).